Consider the following 131-residue polypeptide: D-ribose pyranase (131 aa).

His-20 acts as the Proton donor in catalysis. Substrate contacts are provided by residues Asp-28, His-98, and 120 to 122; that span reads FSN.

It belongs to the RbsD / FucU family. RbsD subfamily. As to quaternary structure, homodecamer.

Its subcellular location is the cytoplasm. It catalyses the reaction beta-D-ribopyranose = beta-D-ribofuranose. The protein operates within carbohydrate metabolism; D-ribose degradation; D-ribose 5-phosphate from beta-D-ribopyranose: step 1/2. Functionally, catalyzes the interconversion of beta-pyran and beta-furan forms of D-ribose. This chain is D-ribose pyranase, found in Petrotoga mobilis (strain DSM 10674 / SJ95).